We begin with the raw amino-acid sequence, 199 residues long: GTP cyclohydrolase-2 (199 aa).

GTP is bound at residue 52 to 56 (RMHSE). Residues Cys-57, Cys-68, and Cys-70 each contribute to the Zn(2+) site. GTP-binding positions include Gln-73, 94–96 (EGR), and Thr-116. Residue Asp-128 is the Proton acceptor of the active site. Residue Arg-130 is the Nucleophile of the active site. The GTP site is built by Thr-151 and Lys-156.

It belongs to the GTP cyclohydrolase II family. The cofactor is Zn(2+).

The catalysed reaction is GTP + 4 H2O = 2,5-diamino-6-hydroxy-4-(5-phosphoribosylamino)-pyrimidine + formate + 2 phosphate + 3 H(+). It functions in the pathway cofactor biosynthesis; riboflavin biosynthesis; 5-amino-6-(D-ribitylamino)uracil from GTP: step 1/4. Catalyzes the conversion of GTP to 2,5-diamino-6-ribosylamino-4(3H)-pyrimidinone 5'-phosphate (DARP), formate and pyrophosphate. The sequence is that of GTP cyclohydrolase-2 from Aliivibrio fischeri (strain MJ11) (Vibrio fischeri).